We begin with the raw amino-acid sequence, 226 residues long: Probable thiol methyltransferase 2 (226 aa).

S-adenosyl-L-methionine contacts are provided by tryptophan 29, tryptophan 33, tryptophan 40, and glycine 67. The residue at position 79 (serine 79) is a Phosphoserine. Residues aspartate 88, 116–117 (DF), and tyrosine 132 each bind S-adenosyl-L-methionine.

It belongs to the class I-like SAM-binding methyltransferase superfamily. TPMT family.

It catalyses the reaction a thiol + S-adenosyl-L-methionine = a methyl thioether + S-adenosyl-L-homocysteine + H(+). Its function is as follows. S-adenosyl-L-methionine-dependent methyltransferase. The protein is Probable thiol methyltransferase 2 (HOL3) of Arabidopsis thaliana (Mouse-ear cress).